Here is a 154-residue protein sequence, read N- to C-terminus: Protein Smg homolog (154 aa).

This sequence belongs to the Smg family.

The protein is Protein Smg homolog of Aromatoleum aromaticum (strain DSM 19018 / LMG 30748 / EbN1) (Azoarcus sp. (strain EbN1)).